The sequence spans 394 residues: Elongation factor Tu (394 aa).

Residues 10 to 204 (KPHINIGTIG…AVDDNIPTPE (195 aa)) enclose the tr-type G domain. Residues 19–26 (GHVDHGKT) are G1. GTP is bound at residue 19 to 26 (GHVDHGKT). Threonine 26 lines the Mg(2+) pocket. The G2 stretch occupies residues 60–64 (GITIN). Positions 81-84 (DCPG) are G3. GTP-binding positions include 81-85 (DCPGH) and 136-139 (NKID). The interval 136-139 (NKID) is G4. The segment at 174-176 (SAL) is G5.

It belongs to the TRAFAC class translation factor GTPase superfamily. Classic translation factor GTPase family. EF-Tu/EF-1A subfamily. Monomer.

It localises to the cytoplasm. It carries out the reaction GTP + H2O = GDP + phosphate + H(+). Its function is as follows. GTP hydrolase that promotes the GTP-dependent binding of aminoacyl-tRNA to the A-site of ribosomes during protein biosynthesis. The protein is Elongation factor Tu of Chlamydia abortus (strain DSM 27085 / S26/3) (Chlamydophila abortus).